We begin with the raw amino-acid sequence, 485 residues long: Protein nucleotidyltransferase YdiU (485 aa).

The ATP site is built by G90, G92, R93, K113, D125, G126, R176, and R183. The active-site Proton acceptor is the D252. Positions 253 and 262 each coordinate Mg(2+). Residue D262 coordinates ATP.

It belongs to the SELO family. Requires Mg(2+) as cofactor. Mn(2+) serves as cofactor.

It carries out the reaction L-seryl-[protein] + ATP = 3-O-(5'-adenylyl)-L-seryl-[protein] + diphosphate. The catalysed reaction is L-threonyl-[protein] + ATP = 3-O-(5'-adenylyl)-L-threonyl-[protein] + diphosphate. It catalyses the reaction L-tyrosyl-[protein] + ATP = O-(5'-adenylyl)-L-tyrosyl-[protein] + diphosphate. The enzyme catalyses L-histidyl-[protein] + UTP = N(tele)-(5'-uridylyl)-L-histidyl-[protein] + diphosphate. It carries out the reaction L-seryl-[protein] + UTP = O-(5'-uridylyl)-L-seryl-[protein] + diphosphate. The catalysed reaction is L-tyrosyl-[protein] + UTP = O-(5'-uridylyl)-L-tyrosyl-[protein] + diphosphate. Nucleotidyltransferase involved in the post-translational modification of proteins. It can catalyze the addition of adenosine monophosphate (AMP) or uridine monophosphate (UMP) to a protein, resulting in modifications known as AMPylation and UMPylation. The polypeptide is Protein nucleotidyltransferase YdiU (Aliivibrio fischeri (strain MJ11) (Vibrio fischeri)).